A 307-amino-acid polypeptide reads, in one-letter code: UDP-N-acetylenolpyruvoylglucosamine reductase (307 aa).

The 165-residue stretch at 34-198 folds into the FAD-binding PCMH-type domain; the sequence is LGGKADVYIT…LEATFALKKA (165 aa). The active site involves Arg-177. Residue Ser-227 is the Proton donor of the active site. Residue Glu-297 is part of the active site.

This sequence belongs to the MurB family. Requires FAD as cofactor.

The protein localises to the cytoplasm. It catalyses the reaction UDP-N-acetyl-alpha-D-muramate + NADP(+) = UDP-N-acetyl-3-O-(1-carboxyvinyl)-alpha-D-glucosamine + NADPH + H(+). It functions in the pathway cell wall biogenesis; peptidoglycan biosynthesis. Cell wall formation. The chain is UDP-N-acetylenolpyruvoylglucosamine reductase from Oceanobacillus iheyensis (strain DSM 14371 / CIP 107618 / JCM 11309 / KCTC 3954 / HTE831).